A 335-amino-acid polypeptide reads, in one-letter code: GTPase Obg (335 aa).

The 159-residue stretch at 1 to 159 folds into the Obg domain; it reads MKFVDSAKIS…IELEMELKLM (159 aa). An OBG-type G domain is found at 160-323; sequence ADVGLVGFPN…LKDELWRQIS (164 aa). GTP-binding positions include 166 to 173, 191 to 195, 213 to 216, 280 to 283, and 304 to 306; these read GFPNAGKS, FTTLV, DIPG, TKMD, and SSV. Mg(2+) is bound by residues Ser173 and Thr193.

The protein belongs to the TRAFAC class OBG-HflX-like GTPase superfamily. OBG GTPase family. In terms of assembly, monomer. The cofactor is Mg(2+).

The protein localises to the cytoplasm. Functionally, an essential GTPase which binds GTP, GDP and possibly (p)ppGpp with moderate affinity, with high nucleotide exchange rates and a fairly low GTP hydrolysis rate. Plays a role in control of the cell cycle, stress response, ribosome biogenesis and in those bacteria that undergo differentiation, in morphogenesis control. In Chlorobaculum parvum (strain DSM 263 / NCIMB 8327) (Chlorobium vibrioforme subsp. thiosulfatophilum), this protein is GTPase Obg.